The chain runs to 670 residues: DNA ligase (670 aa).

Residues 32–36 (DAEYD), 81–82 (SL), and Glu-111 each bind NAD(+). Lys-113 acts as the N6-AMP-lysine intermediate in catalysis. 4 residues coordinate NAD(+): Arg-134, Glu-171, Lys-290, and Lys-314. Zn(2+)-binding residues include Cys-408, Cys-411, Cys-426, and Cys-432. The region spanning 591–670 (EEALSLKGQT…DGLLAVLAGE (80 aa)) is the BRCT domain.

The protein belongs to the NAD-dependent DNA ligase family. LigA subfamily. Mg(2+) is required as a cofactor. Mn(2+) serves as cofactor.

The enzyme catalyses NAD(+) + (deoxyribonucleotide)n-3'-hydroxyl + 5'-phospho-(deoxyribonucleotide)m = (deoxyribonucleotide)n+m + AMP + beta-nicotinamide D-nucleotide.. Its function is as follows. DNA ligase that catalyzes the formation of phosphodiester linkages between 5'-phosphoryl and 3'-hydroxyl groups in double-stranded DNA using NAD as a coenzyme and as the energy source for the reaction. It is essential for DNA replication and repair of damaged DNA. This is DNA ligase from Shewanella sediminis (strain HAW-EB3).